We begin with the raw amino-acid sequence, 193 residues long: Phosphoheptose isomerase (193 aa).

Positions 37–193 constitute an SIS domain; that stretch reads LADSFKAGGK…QLIEKEMVKA (157 aa). Substrate is bound at residue 52 to 54; the sequence is NGG. Residues H61 and E65 each contribute to the Zn(2+) site. Residues E65, 93–94, 119–121, S124, and Q172 contribute to the substrate site; these read ND and STS. Positions 172 and 180 each coordinate Zn(2+).

It belongs to the SIS family. GmhA subfamily. As to quaternary structure, homotetramer. Requires Zn(2+) as cofactor.

It is found in the cytoplasm. The enzyme catalyses 2 D-sedoheptulose 7-phosphate = D-glycero-alpha-D-manno-heptose 7-phosphate + D-glycero-beta-D-manno-heptose 7-phosphate. Its pathway is carbohydrate biosynthesis; D-glycero-D-manno-heptose 7-phosphate biosynthesis; D-glycero-alpha-D-manno-heptose 7-phosphate and D-glycero-beta-D-manno-heptose 7-phosphate from sedoheptulose 7-phosphate: step 1/1. In terms of biological role, catalyzes the isomerization of sedoheptulose 7-phosphate in D-glycero-D-manno-heptose 7-phosphate. The chain is Phosphoheptose isomerase from Serratia proteamaculans (strain 568).